The primary structure comprises 221 residues: Pyridoxine/pyridoxamine 5'-phosphate oxidase (221 aa).

A disordered region spans residues 1–21 (MDYSDPAELRESYDGAPLDPR). Residues 10–13 (RESY) and Lys-68 each bind substrate. FMN is bound by residues 63–68 (RTVLLK), 78–79 (FT), Arg-84, Lys-85, and Gln-107. Substrate contacts are provided by Tyr-125, Arg-129, and Ser-133. FMN-binding positions include 143-144 (QS) and Trp-189. 195–197 (RMH) is a substrate binding site. Arg-199 is an FMN binding site.

It belongs to the pyridoxamine 5'-phosphate oxidase family. In terms of assembly, homodimer. FMN is required as a cofactor.

The enzyme catalyses pyridoxamine 5'-phosphate + O2 + H2O = pyridoxal 5'-phosphate + H2O2 + NH4(+). The catalysed reaction is pyridoxine 5'-phosphate + O2 = pyridoxal 5'-phosphate + H2O2. It functions in the pathway cofactor metabolism; pyridoxal 5'-phosphate salvage; pyridoxal 5'-phosphate from pyridoxamine 5'-phosphate: step 1/1. The protein operates within cofactor metabolism; pyridoxal 5'-phosphate salvage; pyridoxal 5'-phosphate from pyridoxine 5'-phosphate: step 1/1. Catalyzes the oxidation of either pyridoxine 5'-phosphate (PNP) or pyridoxamine 5'-phosphate (PMP) into pyridoxal 5'-phosphate (PLP). The protein is Pyridoxine/pyridoxamine 5'-phosphate oxidase of Thermobifida fusca (strain YX).